The following is a 187-amino-acid chain: Interferon beta (187 aa).

Residues 1–21 form the signal peptide; the sequence is MTNKCLLQIALLLCFSTTALS. Position 24 is a phosphotyrosine (tyrosine 24). Cysteine 52 and cysteine 162 form a disulfide bridge. An N-linked (GlcNAc...) asparagine glycan is attached at asparagine 101.

Belongs to the alpha/beta interferon family. Monomer.

The protein localises to the secreted. Type I interferon cytokine that plays a key role in the innate immune response to infection, developing tumors and other inflammatory stimuli. Signals via binding to high-affinity (IFNAR2) and low-affinity (IFNAR1) heterodimeric receptor, activating the canonical Jak-STAT signaling pathway resulting in transcriptional activation or repression of interferon-regulated genes that encode the effectors of the interferon response, such as antiviral proteins, regulators of cell proliferation and differentiation, and immunoregulatory proteins. Signals mostly via binding to a IFNAR1-IFNAR2 heterodimeric receptor, but can also function with IFNAR1 alone and independently of Jak-STAT pathways. Elicits a wide variety of responses, including antiviral and antibacterial activities, and can regulate the development of B-cells, myelopoiesis and lipopolysaccharide (LPS)-inducible production of tumor necrosis factor. Plays a role in neuronal homeostasis by regulating dopamine turnover and protecting dopaminergic neurons: acts by promoting neuronal autophagy and alpha-synuclein clearance, thereby preventing dopaminergic neuron loss. IFNB1 is more potent than interferon-alpha (IFN-alpha) in inducing the apoptotic and antiproliferative pathways required for control of tumor cell growth. The protein is Interferon beta (IFNB1) of Macaca fascicularis (Crab-eating macaque).